Consider the following 286-residue polypeptide: uncharacterized protein (286 aa).

Positions 1–19 are cleaved as a signal peptide; it reads MISKEYISLLSALLTKGYS.

This is an uncharacterized protein from Acidianus filamentous virus 2 (isolate Italy/Pozzuoli) (AFV-2).